The chain runs to 204 residues: ADP-ribosylation factor-like protein 15 (204 aa).

Residues 39 to 46, 82 to 86, and 142 to 145 contribute to the GTP site; these read GLTGSGKT, ELGGA, and NHQD.

Belongs to the small GTPase superfamily. Arf family.

The polypeptide is ADP-ribosylation factor-like protein 15 (Arl15) (Mus musculus (Mouse)).